Consider the following 241-residue polypeptide: Ribonuclease PH (241 aa).

Residues arginine 89 and 127-129 each bind phosphate; that span reads GTR.

This sequence belongs to the RNase PH family. Homohexameric ring arranged as a trimer of dimers.

It catalyses the reaction tRNA(n+1) + phosphate = tRNA(n) + a ribonucleoside 5'-diphosphate. In terms of biological role, phosphorolytic 3'-5' exoribonuclease that plays an important role in tRNA 3'-end maturation. Removes nucleotide residues following the 3'-CCA terminus of tRNAs; can also add nucleotides to the ends of RNA molecules by using nucleoside diphosphates as substrates, but this may not be physiologically important. Probably plays a role in initiation of 16S rRNA degradation (leading to ribosome degradation) during starvation. The chain is Ribonuclease PH from Xanthomonas euvesicatoria pv. vesicatoria (strain 85-10) (Xanthomonas campestris pv. vesicatoria).